A 198-amino-acid chain; its full sequence is Proteasome subunit beta 2 (198 aa).

The propeptide at 1 to 4 (MVLA) is removed in mature form; by autocatalysis. Residue Thr-5 is the Nucleophile of the active site.

This sequence belongs to the peptidase T1B family. In terms of assembly, the 20S proteasome core is composed of 14 alpha and 14 beta subunits that assemble into four stacked heptameric rings, resulting in a barrel-shaped structure. The two inner rings, each composed of seven catalytic beta subunits, are sandwiched by two outer rings, each composed of seven alpha subunits. The catalytic chamber with the active sites is on the inside of the barrel. Has a gated structure, the ends of the cylinder being occluded by the N-termini of the alpha-subunits. Is capped at one or both ends by the proteasome regulatory ATPase, PAN.

The protein resides in the cytoplasm. It catalyses the reaction Cleavage of peptide bonds with very broad specificity.. Its activity is regulated as follows. The formation of the proteasomal ATPase PAN-20S proteasome complex, via the docking of the C-termini of PAN into the intersubunit pockets in the alpha-rings, triggers opening of the gate for substrate entry. Interconversion between the open-gate and close-gate conformations leads to a dynamic regulation of the 20S proteasome proteolysis activity. Component of the proteasome core, a large protease complex with broad specificity involved in protein degradation. The sequence is that of Proteasome subunit beta 2 from Korarchaeum cryptofilum (strain OPF8).